The chain runs to 479 residues: Sulfate adenylyltransferase subunit 1 (479 aa).

Residues 25-239 (KSLLRFLTCG…EVLETVDIQR (215 aa)) form the tr-type G domain. Residues 34–41 (GSVDDGKS) form a G1 region. 34–41 (GSVDDGKS) is a binding site for GTP. The tract at residues 92 to 96 (GITID) is G2. The G3 stretch occupies residues 113–116 (DTPG). GTP-binding positions include 113–117 (DTPGH) and 168–171 (NKMD). A G4 region spans residues 168-171 (NKMD). The tract at residues 206–208 (SAL) is G5.

Belongs to the TRAFAC class translation factor GTPase superfamily. Classic translation factor GTPase family. CysN/NodQ subfamily. Heterodimer composed of CysD, the smaller subunit, and CysN.

The catalysed reaction is sulfate + ATP + H(+) = adenosine 5'-phosphosulfate + diphosphate. The protein operates within sulfur metabolism; hydrogen sulfide biosynthesis; sulfite from sulfate: step 1/3. In terms of biological role, with CysD forms the ATP sulfurylase (ATPS) that catalyzes the adenylation of sulfate producing adenosine 5'-phosphosulfate (APS) and diphosphate, the first enzymatic step in sulfur assimilation pathway. APS synthesis involves the formation of a high-energy phosphoric-sulfuric acid anhydride bond driven by GTP hydrolysis by CysN coupled to ATP hydrolysis by CysD. In Salmonella gallinarum (strain 287/91 / NCTC 13346), this protein is Sulfate adenylyltransferase subunit 1.